The following is a 953-amino-acid chain: Coatomer subunit beta (953 aa).

Thr2 bears the N-acetylthreonine mark. 6 HEAT repeats span residues 96–131, 132–168, 240–276, 277–314, 316–353, and 396–433; these read HEMILVCDAYRKDLQHPNEFIRGSTLRFLCKLKEAE, LLEPLMPAIRACLEHRHSYVRRNAVLAIYTIYRNFEH, SERARFIRCIYNLLQSSSPAVKYEAAGTLVTLSSAPT, AIKAAAQCYIDLIIKESDNNVKLIVLDRLIELKEHPAH, RVLQDLVMDILRVLSTPDLEVRKKTLQLALDLVSSRNV, and DMAANVIPVLMEFLSDSNEAAAADVLEFVREAIQRFDN. Lys494 is modified (N6-acetyllysine).

As to quaternary structure, oligomeric complex that consists of at least the alpha, beta, beta', gamma, delta, epsilon and zeta subunits. Interacts with ARF1 (myristoylated); this interaction is required for binding of COPB1 to Golgi membranes. Interacts with CAPN8 and PRKCE. Interacts with SCYL1. Interacts with COPG1. Interacts (via trunk domain) with ARF1 (via switch I region); the interaction is direct. Interacts with KCNK2 (via N-terminus); this interaction increases the channel-mediated whole cell currents and promotes plasma membrane expression of KCNK2. Interacts with STX17. Interacts with TMEM115. Interacts with TMEM41B. Proteolytically cleaved between Ser-528 and Ser-529 by CAPN8.

The protein resides in the cytoplasm. Its subcellular location is the cytosol. The protein localises to the golgi apparatus membrane. It localises to the cytoplasmic vesicle. It is found in the COPI-coated vesicle membrane. The protein resides in the cell membrane. Its subcellular location is the endoplasmic reticulum-Golgi intermediate compartment. The coatomer is a cytosolic protein complex that binds to dilysine motifs and reversibly associates with Golgi non-clathrin-coated vesicles, which further mediate biosynthetic protein transport from the ER, via the Golgi up to the trans Golgi network. Coatomer complex is required for budding from Golgi membranes, and is essential for the retrograde Golgi-to-ER transport of dilysine-tagged proteins. In mammals, the coatomer can only be recruited by membranes associated to ADP-ribosylation factors (ARFs), which are small GTP-binding proteins; the complex also influences the Golgi structural integrity, as well as the processing, activity, and endocytic recycling of LDL receptors. Involved in the Golgi disassembly and reassembly processes during cell cycle. Plays a functional role in facilitating the transport of kappa-type opioid receptor mRNAs into axons and enhances translation of these proteins. Required for limiting lipid storage in lipid droplets. Involved in lipid homeostasis by regulating the presence of perilipin family members PLIN2 and PLIN3 at the lipid droplet surface and promoting the association of adipocyte surface triglyceride lipase (PNPLA2) with the lipid droplet to mediate lipolysis. Involved in autophagy by playing a role in early endosome function. Plays a role in organellar compartmentalization of secretory compartments including endoplasmic reticulum (ER)-Golgi intermediate compartment (ERGIC), Golgi, trans-Golgi network (TGN) and recycling endosomes, and in biosynthetic transport of CAV1. This chain is Coatomer subunit beta (COPB1), found in Bos taurus (Bovine).